The following is a 207-amino-acid chain: Imidazole glycerol phosphate synthase subunit HisH (207 aa).

The region spanning 1–206 (MMIVIDYDAG…KEYVYENTAR (206 aa)) is the Glutamine amidotransferase type-1 domain. Cys79 (nucleophile) is an active-site residue. Catalysis depends on residues His181 and Glu183.

In terms of assembly, heterodimer of HisH and HisF.

It is found in the cytoplasm. The enzyme catalyses 5-[(5-phospho-1-deoxy-D-ribulos-1-ylimino)methylamino]-1-(5-phospho-beta-D-ribosyl)imidazole-4-carboxamide + L-glutamine = D-erythro-1-(imidazol-4-yl)glycerol 3-phosphate + 5-amino-1-(5-phospho-beta-D-ribosyl)imidazole-4-carboxamide + L-glutamate + H(+). The catalysed reaction is L-glutamine + H2O = L-glutamate + NH4(+). It participates in amino-acid biosynthesis; L-histidine biosynthesis; L-histidine from 5-phospho-alpha-D-ribose 1-diphosphate: step 5/9. Functionally, IGPS catalyzes the conversion of PRFAR and glutamine to IGP, AICAR and glutamate. The HisH subunit catalyzes the hydrolysis of glutamine to glutamate and ammonia as part of the synthesis of IGP and AICAR. The resulting ammonia molecule is channeled to the active site of HisF. The protein is Imidazole glycerol phosphate synthase subunit HisH of Streptococcus sanguinis (strain SK36).